Consider the following 259-residue polypeptide: uncharacterized protein (259 aa).

The protein belongs to the BtpA family.

This is an uncharacterized protein from Pyrococcus horikoshii (strain ATCC 700860 / DSM 12428 / JCM 9974 / NBRC 100139 / OT-3).